Consider the following 235-residue polypeptide: RNA polymerase sigma factor SigI7 (235 aa).

A Polymerase core binding motif is present at residues 49-62; the sequence is DELSIALMAFVETI. Positions 191-210 form a DNA-binding region, H-T-H motif; sequence VAEIEQSLKIPRKTIERARK.

This sequence belongs to the sigma-70 factor family. SigI subfamily. Interacts with RsgI7.

It is found in the cytoplasm. Its activity is regulated as follows. Negatively regulated by the anti-sigma-I factor RsgI7. Sigma factors are initiation factors that promote the attachment of RNA polymerase to specific initiation sites and are then released. The protein is RNA polymerase sigma factor SigI7 of Acetivibrio thermocellus (strain ATCC 27405 / DSM 1237 / JCM 9322 / NBRC 103400 / NCIMB 10682 / NRRL B-4536 / VPI 7372) (Clostridium thermocellum).